The following is a 323-amino-acid chain: Ribokinase (323 aa).

Substrate contacts are provided by residues Met-26–Asp-28, Gly-54–Asn-58, and Glu-155. Residues Asn-200, Thr-236–Gly-241, and Thr-257 contribute to the ATP site. Residues Asp-264 and Thr-266 each contribute to the K(+) site. ATP is bound by residues Gly-269–Asp-270 and Asn-296. A substrate-binding site is contributed by Asp-270. Catalysis depends on Asp-270, which acts as the Proton acceptor. K(+) contacts are provided by Ser-302, Ala-305, Gly-307, and Ser-311.

It belongs to the carbohydrate kinase PfkB family. Ribokinase subfamily. As to quaternary structure, homodimer. It depends on Mg(2+) as a cofactor.

It localises to the cytoplasm. It is found in the nucleus. The catalysed reaction is D-ribose + ATP = D-ribose 5-phosphate + ADP + H(+). The protein operates within carbohydrate metabolism; D-ribose degradation; D-ribose 5-phosphate from beta-D-ribopyranose: step 2/2. Its activity is regulated as follows. Activated by a monovalent cation that binds near, but not in, the active site. The most likely occupant of the site in vivo is potassium. Ion binding induces a conformational change that may alter substrate affinity. Competitively inhibited by phosphonoacetic acid, etidronate, 2-carboxethylphosphonic acid, N-(phosphonomethyl)glycine, N-(phosphonomethyl)iminodiacetic acid and clodronate. In terms of biological role, catalyzes the phosphorylation of ribose at O-5 in a reaction requiring ATP and magnesium. The resulting D-ribose-5-phosphate can then be used either for sythesis of nucleotides, histidine, and tryptophan, or as a component of the pentose phosphate pathway. The protein is Ribokinase of Mus musculus (Mouse).